The following is a 633-amino-acid chain: 1-deoxy-D-xylulose-5-phosphate synthase (633 aa).

Residues His72 and Gly113–Ser115 contribute to the thiamine diphosphate site. A Mg(2+)-binding site is contributed by Asp144. Residues Gly145–Ala146, Asn173, Tyr284, and Glu367 each bind thiamine diphosphate. Asn173 contacts Mg(2+).

Belongs to the transketolase family. DXPS subfamily. Homodimer. Mg(2+) serves as cofactor. The cofactor is thiamine diphosphate.

The catalysed reaction is D-glyceraldehyde 3-phosphate + pyruvate + H(+) = 1-deoxy-D-xylulose 5-phosphate + CO2. It functions in the pathway metabolic intermediate biosynthesis; 1-deoxy-D-xylulose 5-phosphate biosynthesis; 1-deoxy-D-xylulose 5-phosphate from D-glyceraldehyde 3-phosphate and pyruvate: step 1/1. Its function is as follows. Catalyzes the acyloin condensation reaction between C atoms 2 and 3 of pyruvate and glyceraldehyde 3-phosphate to yield 1-deoxy-D-xylulose-5-phosphate (DXP). This Lysinibacillus sphaericus (strain C3-41) protein is 1-deoxy-D-xylulose-5-phosphate synthase.